Consider the following 387-residue polypeptide: Structural protein ORF387 (387 aa).

A coiled-coil region spans residues 315–387 (KTFQEMVKVA…EEKNNTVKLS (73 aa)). The tract at residues 365-387 (LTEEQQQQNETEEEEKNNTVKLS) is disordered.

The protein resides in the virion. The chain is Structural protein ORF387 from Acidianus convivator (ATV).